We begin with the raw amino-acid sequence, 297 residues long: Acetyl-coenzyme A carboxylase carboxyl transferase subunit beta (297 aa).

In terms of domain architecture, CoA carboxyltransferase N-terminal spans 27-296 (LWHKCPSCEA…PEEAREAAAV (270 aa)). Residues C31, C34, C50, and C53 each contribute to the Zn(2+) site. Residues 31-53 (CPSCEAVLYRPELEKTLDVCPKC) form a C4-type zinc finger.

Belongs to the AccD/PCCB family. As to quaternary structure, acetyl-CoA carboxylase is a heterohexamer composed of biotin carboxyl carrier protein (AccB), biotin carboxylase (AccC) and two subunits each of ACCase subunit alpha (AccA) and ACCase subunit beta (AccD). The cofactor is Zn(2+).

Its subcellular location is the cytoplasm. The enzyme catalyses N(6)-carboxybiotinyl-L-lysyl-[protein] + acetyl-CoA = N(6)-biotinyl-L-lysyl-[protein] + malonyl-CoA. Its pathway is lipid metabolism; malonyl-CoA biosynthesis; malonyl-CoA from acetyl-CoA: step 1/1. Its function is as follows. Component of the acetyl coenzyme A carboxylase (ACC) complex. Biotin carboxylase (BC) catalyzes the carboxylation of biotin on its carrier protein (BCCP) and then the CO(2) group is transferred by the transcarboxylase to acetyl-CoA to form malonyl-CoA. In Pseudomonas putida (strain ATCC 700007 / DSM 6899 / JCM 31910 / BCRC 17059 / LMG 24140 / F1), this protein is Acetyl-coenzyme A carboxylase carboxyl transferase subunit beta.